Here is a 256-residue protein sequence, read N- to C-terminus: Acetyl-coenzyme A carboxylase carboxyl transferase subunit alpha (256 aa).

A CoA carboxyltransferase C-terminal domain is found at 1-236 (MSDVARILKE…KTAIVDELAE (236 aa)).

It belongs to the AccA family. As to quaternary structure, acetyl-CoA carboxylase is a heterohexamer composed of biotin carboxyl carrier protein (AccB), biotin carboxylase (AccC) and two subunits each of ACCase subunit alpha (AccA) and ACCase subunit beta (AccD).

The protein resides in the cytoplasm. The enzyme catalyses N(6)-carboxybiotinyl-L-lysyl-[protein] + acetyl-CoA = N(6)-biotinyl-L-lysyl-[protein] + malonyl-CoA. It participates in lipid metabolism; malonyl-CoA biosynthesis; malonyl-CoA from acetyl-CoA: step 1/1. Functionally, component of the acetyl coenzyme A carboxylase (ACC) complex. First, biotin carboxylase catalyzes the carboxylation of biotin on its carrier protein (BCCP) and then the CO(2) group is transferred by the carboxyltransferase to acetyl-CoA to form malonyl-CoA. This chain is Acetyl-coenzyme A carboxylase carboxyl transferase subunit alpha, found in Streptococcus thermophilus (strain ATCC BAA-491 / LMD-9).